A 672-amino-acid chain; its full sequence is uncharacterized protein (672 aa).

A compositionally biased stretch (basic and acidic residues) spans methionine 1–leucine 10. Residues methionine 1–proline 40 form a disordered region.

This is an uncharacterized protein from Mycobacterium tuberculosis (strain CDC 1551 / Oshkosh).